A 505-amino-acid chain; its full sequence is NADH-quinone oxidoreductase subunit N 1 (505 aa).

The next 14 membrane-spanning stretches (helical) occupy residues L18–L38, L45–F65, Y84–A104, I116–N136, F138–Y158, L173–V193, F223–F243, A271–V291, Q292–T312, L319–H339, V345–V365, F391–G411, G429–I449, and V473–V493.

This sequence belongs to the complex I subunit 2 family. As to quaternary structure, NDH-1 is composed of 14 different subunits. Subunits NuoA, H, J, K, L, M, N constitute the membrane sector of the complex.

It localises to the cell inner membrane. It catalyses the reaction a quinone + NADH + 5 H(+)(in) = a quinol + NAD(+) + 4 H(+)(out). In terms of biological role, NDH-1 shuttles electrons from NADH, via FMN and iron-sulfur (Fe-S) centers, to quinones in the respiratory chain. The immediate electron acceptor for the enzyme in this species is believed to be ubiquinone. Couples the redox reaction to proton translocation (for every two electrons transferred, four hydrogen ions are translocated across the cytoplasmic membrane), and thus conserves the redox energy in a proton gradient. This chain is NADH-quinone oxidoreductase subunit N 1, found in Opitutus terrae (strain DSM 11246 / JCM 15787 / PB90-1).